The sequence spans 336 residues: Acetyl-coenzyme A carboxylase carboxyl transferase subunit alpha (336 aa).

The 261-residue stretch at 48-308 folds into the CoA carboxyltransferase C-terminal domain; that stretch reads ALEAKVESLR…KSMLIEELQG (261 aa).

It belongs to the AccA family. Acetyl-CoA carboxylase is a heterohexamer composed of biotin carboxyl carrier protein (AccB), biotin carboxylase (AccC) and two subunits each of ACCase subunit alpha (AccA) and ACCase subunit beta (AccD).

The protein localises to the cytoplasm. The catalysed reaction is N(6)-carboxybiotinyl-L-lysyl-[protein] + acetyl-CoA = N(6)-biotinyl-L-lysyl-[protein] + malonyl-CoA. It functions in the pathway lipid metabolism; malonyl-CoA biosynthesis; malonyl-CoA from acetyl-CoA: step 1/1. Its function is as follows. Component of the acetyl coenzyme A carboxylase (ACC) complex. First, biotin carboxylase catalyzes the carboxylation of biotin on its carrier protein (BCCP) and then the CO(2) group is transferred by the carboxyltransferase to acetyl-CoA to form malonyl-CoA. This Chlorobaculum parvum (strain DSM 263 / NCIMB 8327) (Chlorobium vibrioforme subsp. thiosulfatophilum) protein is Acetyl-coenzyme A carboxylase carboxyl transferase subunit alpha.